The chain runs to 632 residues: FAD-binding monooxygenase ausB (632 aa).

A disordered region spans residues 1–50 (MASAPEVESVKTPDPASTKTQHTSIAEIHTADQTWNNESNTRLPPNHRHH). Composition is skewed to polar residues over residues 15–24 (PASTKTQHTS) and 31–43 (ADQTWNNESNTRL). FAD is bound by residues 116–119 (TWYW), 128–129 (DI), and tyrosine 134. 126–128 (MCD) contributes to the NADP(+) binding site. NADP(+)-binding positions include 269-275 (TGSTAIQ) and 292-293 (RT).

It belongs to the FAD-binding monooxygenase family. The cofactor is FAD.

It catalyses the reaction protoaustinoid A + AH2 + O2 = berkeleyone A + A + H2O. The protein operates within secondary metabolite biosynthesis; terpenoid biosynthesis. In terms of biological role, FAD-binding monooxygenase; part of the gene cluster that mediates the biosynthesis of calidodehydroaustin, a fungal meroterpenoid. The first step of the pathway is the synthesis of 3,5-dimethylorsellinic acid by the polyketide synthase ausA. 3,5-dimethylorsellinic acid is then prenylated by the polyprenyl transferase ausN. Further epoxidation by the FAD-dependent monooxygenase ausM and cyclization by the probable terpene cyclase ausL lead to the formation of protoaustinoid A. Protoaustinoid A is then oxidized to spiro-lactone preaustinoid A3 by the combined action of the FAD-binding monooxygenases ausB and ausC, and the dioxygenase ausE. Acid-catalyzed keto-rearrangement and ring contraction of the tetraketide portion of preaustinoid A3 by ausJ lead to the formation of preaustinoid A4. The aldo-keto reductase ausK, with the help of ausH, is involved in the next step by transforming preaustinoid A4 into isoaustinone which is in turn hydroxylated by the P450 monooxygenase ausI to form austinolide. The cytochrome P450 monooxygenase ausG modifies austinolide to austinol. Austinol is further acetylated to austin by the O-acetyltransferase ausP, which spontaneously changes to dehydroaustin. The cytochrome P450 monooxygenase ausR then converts dehydroaustin is into 7-dehydrodehydroaustin. The hydroxylation catalyzed by ausR permits the O-acetyltransferase ausQ to add an additional acetyl group to the molecule, leading to the formation of acetoxydehydroaustin. The short chain dehydrogenase ausT catalyzes the reduction of the double bond present between carbon atoms 1 and 2 to convert 7-dehydrodehydroaustin into 1,2-dihydro-7-hydroxydehydroaustin. AusQ catalyzes not only an acetylation reaction but also the addition of the PKS ausV diketide product to 1,2-dihydro-7-hydroxydehydroaustin, forming precalidodehydroaustin. Finally, the iron/alpha-ketoglutarate-dependent dioxygenase converts precalidodehydroaustin into calidodehydroaustin. The polypeptide is FAD-binding monooxygenase ausB (Aspergillus calidoustus).